Here is a 37-residue protein sequence, read N- to C-terminus: Palicourein (37 aa).

A cross-link (cyclopeptide (Gly-Asn)) is located at residues 1 to 37 (GDPTFCGETCRVIPVCTYSAALGCTCDDRSDGLCKRN). 3 disulfide bridges follow: C6-C24, C10-C26, and C16-C34.

This sequence belongs to the cyclotide family. Post-translationally, this is a cyclic peptide.

Probably participates in a plant defense mechanism. Inhibits the cytopathic effects of the human immunodeficiency virus. This is Palicourein from Palicourea condensata (Cappel).